We begin with the raw amino-acid sequence, 161 residues long: SsrA-binding protein (161 aa).

Residues 137 to 161 are disordered; the sequence is HDKRTDSKEKDWNRDKARIMKSSLR. Residues 139–154 show a composition bias toward basic and acidic residues; the sequence is KRTDSKEKDWNRDKAR.

This sequence belongs to the SmpB family.

Its subcellular location is the cytoplasm. Functionally, required for rescue of stalled ribosomes mediated by trans-translation. Binds to transfer-messenger RNA (tmRNA), required for stable association of tmRNA with ribosomes. tmRNA and SmpB together mimic tRNA shape, replacing the anticodon stem-loop with SmpB. tmRNA is encoded by the ssrA gene; the 2 termini fold to resemble tRNA(Ala) and it encodes a 'tag peptide', a short internal open reading frame. During trans-translation Ala-aminoacylated tmRNA acts like a tRNA, entering the A-site of stalled ribosomes, displacing the stalled mRNA. The ribosome then switches to translate the ORF on the tmRNA; the nascent peptide is terminated with the 'tag peptide' encoded by the tmRNA and targeted for degradation. The ribosome is freed to recommence translation, which seems to be the essential function of trans-translation. The polypeptide is SsrA-binding protein (Aliivibrio salmonicida (strain LFI1238) (Vibrio salmonicida (strain LFI1238))).